We begin with the raw amino-acid sequence, 327 residues long: Undecaprenyl-phosphate 4-deoxy-4-formamido-L-arabinose transferase (327 aa).

At 1-235 (MFDAAPIKKV…TCLTTTPLRL (235 aa)) the chain is on the cytoplasmic side. The chain crosses the membrane as a helical span at residues 236 to 256 (LSLLGSVIAIGGFSLSVLLIV). Residues 257–269 (LRLALGPQWAAEG) are Periplasmic-facing. The chain crosses the membrane as a helical span at residues 270–290 (VFMLFAVLFTFIGAQFIGMGL). Residues 291-327 (LGEYIGRIYNDVRARPRYFVQQVIYPESTPFTEESHQ) are Cytoplasmic-facing.

This sequence belongs to the glycosyltransferase 2 family.

Its subcellular location is the cell inner membrane. The catalysed reaction is UDP-4-deoxy-4-formamido-beta-L-arabinose + di-trans,octa-cis-undecaprenyl phosphate = 4-deoxy-4-formamido-alpha-L-arabinopyranosyl di-trans,octa-cis-undecaprenyl phosphate + UDP. The protein operates within glycolipid biosynthesis; 4-amino-4-deoxy-alpha-L-arabinose undecaprenyl phosphate biosynthesis; 4-amino-4-deoxy-alpha-L-arabinose undecaprenyl phosphate from UDP-4-deoxy-4-formamido-beta-L-arabinose and undecaprenyl phosphate: step 1/2. It participates in bacterial outer membrane biogenesis; lipopolysaccharide biosynthesis. Functionally, catalyzes the transfer of 4-deoxy-4-formamido-L-arabinose from UDP to undecaprenyl phosphate. The modified arabinose is attached to lipid A and is required for resistance to polymyxin and cationic antimicrobial peptides. The sequence is that of Undecaprenyl-phosphate 4-deoxy-4-formamido-L-arabinose transferase from Salmonella dublin (strain CT_02021853).